The chain runs to 100 residues: Large ribosomal subunit protein uL23 (100 aa).

It belongs to the universal ribosomal protein uL23 family. In terms of assembly, part of the 50S ribosomal subunit. Contacts protein L29, and trigger factor when it is bound to the ribosome.

In terms of biological role, one of the early assembly proteins it binds 23S rRNA. One of the proteins that surrounds the polypeptide exit tunnel on the outside of the ribosome. Forms the main docking site for trigger factor binding to the ribosome. In Pectobacterium atrosepticum (strain SCRI 1043 / ATCC BAA-672) (Erwinia carotovora subsp. atroseptica), this protein is Large ribosomal subunit protein uL23.